We begin with the raw amino-acid sequence, 378 residues long: Opsin Rh4 (378 aa).

Over 1–53 (MEPLCNASEPPLRPEARSSGNGDLQFLGWNVPPDQIQYIPEHWLTQLEPPASM) the chain is Extracellular. A glycan (N-linked (GlcNAc...) asparagine) is linked at Asn6. The chain crosses the membrane as a helical span at residues 54-78 (HYMLGVFYIFLFCASTVGNGMVIWI). Residues 79 to 90 (FSTSKSLRTPSN) are Cytoplasmic-facing. The helical transmembrane segment at 91 to 111 (MFVLNLAVFDLIMCLKAPIFI) threads the bilayer. Topologically, residues 112–127 (YNSFHRGFALGNTWCQ) are extracellular. A disulfide bond links Cys126 and Cys203. A helical membrane pass occupies residues 128–148 (IFASIGSYSGIGAGMTNAAIG). The Cytoplasmic segment spans residues 149-167 (YDRYNVITKPMNRNMTFTK). Residues 168-192 (AVIMNIIIWLYCTPWVVLPLTQFWD) traverse the membrane as a helical segment. Residues 193 to 216 (RFVPEGYLTSCSFDYLSDNFDTRL) are Extracellular-facing. Residues 217–244 (FVGTIFFFSFVCPTLMILYYYSQIVGHV) form a helical membrane-spanning segment. Residues 245 to 280 (FSHEKALREQAKKMNVESLRSNVDKSKETAEIRIAK) are Cytoplasmic-facing. A helical transmembrane segment spans residues 281-304 (AAITICFLFFVSWTPYGVMSLIGA). Over 305-312 (FGDKSLLT) the chain is Extracellular. Residues 313 to 337 (PGATMIPACTCKLVACIDPFVYAIS) traverse the membrane as a helical segment. Lys324 bears the N6-(retinylidene)lysine mark. Residues 338–378 (HPRYRLELQKRCPWLGVNEKSGEISSAQSTTTQEQQQTTAA) are Cytoplasmic-facing.

This sequence belongs to the G-protein coupled receptor 1 family. Opsin subfamily. Phosphorylated on some or all of the serine and threonine residues present in the C-terminal region.

The protein localises to the membrane. Functionally, visual pigments are the light-absorbing molecules that mediate vision. They consist of an apoprotein, opsin, covalently linked to cis-retinal. This chain is Opsin Rh4 (Rh4), found in Drosophila melanogaster (Fruit fly).